A 211-amino-acid polypeptide reads, in one-letter code: Large ribosomal subunit protein eL13 (211 aa).

Position 16 is an N6-acetyllysine (Lys-16). 3 positions are modified to phosphoserine: Ser-52, Ser-77, and Ser-106. Residues Lys-123 and Lys-145 each participate in a glycyl lysine isopeptide (Lys-Gly) (interchain with G-Cter in SUMO2) cross-link. A Glycyl lysine isopeptide (Lys-Gly) (interchain with G-Cter in SUMO1); alternate cross-link involves residue Lys-174. Glycyl lysine isopeptide (Lys-Gly) (interchain with G-Cter in SUMO2); alternate cross-links involve residues Lys-174 and Lys-177. Lys-177 carries the N6-acetyllysine; alternate modification.

Belongs to the eukaryotic ribosomal protein eL13 family. Component of the large ribosomal subunit.

The protein localises to the cytoplasm. In terms of biological role, component of the large ribosomal subunit. The ribosome is a large ribonucleoprotein complex responsible for the synthesis of proteins in the cell. The chain is Large ribosomal subunit protein eL13 (Rpl13) from Mus musculus (Mouse).